A 134-amino-acid chain; its full sequence is Small ribosomal subunit protein uS8 (134 aa).

This sequence belongs to the universal ribosomal protein uS8 family. As to quaternary structure, part of the 30S ribosomal subunit. Contacts proteins S5 and S12.

In terms of biological role, one of the primary rRNA binding proteins, it binds directly to 16S rRNA central domain where it helps coordinate assembly of the platform of the 30S subunit. This Petrotoga mobilis (strain DSM 10674 / SJ95) protein is Small ribosomal subunit protein uS8.